Here is a 194-residue protein sequence, read N- to C-terminus: uncharacterized protein (194 aa).

It belongs to the mimivirus L114/R131 family.

This is an uncharacterized protein from Acanthamoeba polyphaga mimivirus (APMV).